The sequence spans 516 residues: Phosphatidylserine decarboxylase proenzyme 2, mitochondrial (516 aa).

The transit peptide at 1-21 (MRPRQRFRRFHPRWSKVNLRG) directs the protein to the mitochondrion. Topologically, residues 22–33 (FGGVGALKGVKA) are mitochondrial matrix. A helical transmembrane segment spans residues 34–52 (LNGMNVRVSMRLKWISNRI). Residues 53–516 (HRIRRSRRLG…GQYVRVGEAL (464 aa)) lie on the Mitochondrial intermembrane side of the membrane. Residues D159, H373, and S488 each act as charge relay system; for autoendoproteolytic cleavage activity in the active site. S488 (schiff-base intermediate with substrate; via pyruvic acid; for decarboxylase activity) is an active-site residue. At S488 the chain carries Pyruvic acid (Ser); by autocatalysis.

It belongs to the phosphatidylserine decarboxylase family. PSD-B subfamily. Eukaryotic type I sub-subfamily. As to quaternary structure, heterodimer of a large membrane-associated beta subunit and a small pyruvoyl-containing alpha subunit. Pyruvate is required as a cofactor. Is synthesized initially as an inactive proenzyme. Formation of the active enzyme involves a self-maturation process in which the active site pyruvoyl group is generated from an internal serine residue via an autocatalytic post-translational modification. Two non-identical subunits are generated from the proenzyme in this reaction, and the pyruvate is formed at the N-terminus of the alpha chain, which is derived from the carboxyl end of the proenzyme. The autoendoproteolytic cleavage occurs by a canonical serine protease mechanism, in which the side chain hydroxyl group of the serine supplies its oxygen atom to form the C-terminus of the beta chain, while the remainder of the serine residue undergoes an oxidative deamination to produce ammonia and the pyruvoyl prosthetic group on the alpha chain. During this reaction, the Ser that is part of the protease active site of the proenzyme becomes the pyruvoyl prosthetic group, which constitutes an essential element of the active site of the mature decarboxylase.

It is found in the mitochondrion. Its subcellular location is the mitochondrion inner membrane. It localises to the nucleus envelope. The protein resides in the lipid droplet. The protein localises to the endoplasmic reticulum membrane. The catalysed reaction is a 1,2-diacyl-sn-glycero-3-phospho-L-serine + H(+) = a 1,2-diacyl-sn-glycero-3-phosphoethanolamine + CO2. Its pathway is phospholipid metabolism; phosphatidylethanolamine biosynthesis; phosphatidylethanolamine from CDP-diacylglycerol: step 2/2. Its function is as follows. Catalyzes the formation of phosphatidylethanolamine (PtdEtn) from phosphatidylserine (PtdSer). Plays a central role in phospholipid metabolism and in the interorganelle trafficking of phosphatidylserine. Together with psd1 and psd3, responsible for the majority of phosphatidylethanolamine synthesis. Plays a role in lipid droplet biogenesis at the endoplasmic reticulum membrane. In Schizosaccharomyces pombe (strain 972 / ATCC 24843) (Fission yeast), this protein is Phosphatidylserine decarboxylase proenzyme 2, mitochondrial.